Reading from the N-terminus, the 248-residue chain is Proteasome subunit alpha type-7 (248 aa).

O-linked (GlcNAc) serine glycosylation is present at Ser130. Tyr153 is modified (phosphotyrosine). At Lys227 the chain carries N6-acetyllysine.

This sequence belongs to the peptidase T1A family. In terms of assembly, the 26S proteasome consists of a 20S proteasome core and two 19S regulatory subunits. The 20S proteasome core is a barrel-shaped complex made of 28 subunits that are arranged in four stacked rings. The two outer rings are each formed by seven alpha subunits, and the two inner rings are formed by seven beta subunits. The proteolytic activity is exerted by three beta-subunits PSMB5, PSMB6 and PSMB7. PSMA7 interacts directly with the PSMG1-PSMG2 heterodimer which promotes 20S proteasome assembly. Interacts with HIF1A. Interacts with RAB7A. Interacts with PRKN. Interacts with ABL1 and ABL2. Interacts with EMAP2. Interacts with MAVS.

Its subcellular location is the cytoplasm. The protein localises to the nucleus. In terms of biological role, component of the 20S core proteasome complex involved in the proteolytic degradation of most intracellular proteins. This complex plays numerous essential roles within the cell by associating with different regulatory particles. Associated with two 19S regulatory particles, forms the 26S proteasome and thus participates in the ATP-dependent degradation of ubiquitinated proteins. The 26S proteasome plays a key role in the maintenance of protein homeostasis by removing misfolded or damaged proteins that could impair cellular functions, and by removing proteins whose functions are no longer required. Associated with the PA200 or PA28, the 20S proteasome mediates ubiquitin-independent protein degradation. This type of proteolysis is required in several pathways including spermatogenesis (20S-PA200 complex) or generation of a subset of MHC class I-presented antigenic peptides (20S-PA28 complex). Inhibits the transactivation function of HIF-1A under both normoxic and hypoxia-mimicking conditions. The interaction with EMAP2 increases the proteasome-mediated HIF-1A degradation under the hypoxic conditions. Plays a role in hepatitis C virus internal ribosome entry site-mediated translation. Mediates nuclear translocation of the androgen receptor (AR) and thereby enhances androgen-mediated transactivation. Promotes MAVS degradation and thereby negatively regulates MAVS-mediated innate immune response. The polypeptide is Proteasome subunit alpha type-7 (PSMA7) (Bos taurus (Bovine)).